A 449-amino-acid chain; its full sequence is Kynurenine 3-monooxygenase (449 aa).

Belongs to the aromatic-ring hydroxylase family. KMO subfamily. FAD is required as a cofactor.

The catalysed reaction is L-kynurenine + NADPH + O2 + H(+) = 3-hydroxy-L-kynurenine + NADP(+) + H2O. It functions in the pathway cofactor biosynthesis; NAD(+) biosynthesis; quinolinate from L-kynurenine: step 1/3. In terms of biological role, catalyzes the hydroxylation of L-kynurenine (L-Kyn) to form 3-hydroxy-L-kynurenine (L-3OHKyn). Required for synthesis of quinolinic acid. The protein is Kynurenine 3-monooxygenase of Cytophaga hutchinsonii (strain ATCC 33406 / DSM 1761 / CIP 103989 / NBRC 15051 / NCIMB 9469 / D465).